A 212-amino-acid polypeptide reads, in one-letter code: Pyrrolidone-carboxylate peptidase (212 aa).

Residues Glu-80, Cys-143, and His-165 contribute to the active site.

Belongs to the peptidase C15 family. As to quaternary structure, homotetramer.

Its subcellular location is the cytoplasm. The enzyme catalyses Release of an N-terminal pyroglutamyl group from a polypeptide, the second amino acid generally not being Pro.. Its function is as follows. Removes 5-oxoproline from various penultimate amino acid residues except L-proline. The polypeptide is Pyrrolidone-carboxylate peptidase (Aliivibrio fischeri (strain MJ11) (Vibrio fischeri)).